The sequence spans 476 residues: Bifunctional protein HldE (476 aa).

The ribokinase stretch occupies residues 1 to 318; that stretch reads MAQYSAEFKQ…ENAIHARPET (318 aa). Residue 195-198 coordinates ATP; sequence NMSE. Asp-264 is an active-site residue. Residues 344–476 form a cytidylyltransferase region; sequence MTNGCFDILH…VIEKIKLLKD (133 aa).

It in the N-terminal section; belongs to the carbohydrate kinase PfkB family. This sequence in the C-terminal section; belongs to the cytidylyltransferase family. As to quaternary structure, homodimer.

It carries out the reaction D-glycero-beta-D-manno-heptose 7-phosphate + ATP = D-glycero-beta-D-manno-heptose 1,7-bisphosphate + ADP + H(+). The enzyme catalyses D-glycero-beta-D-manno-heptose 1-phosphate + ATP + H(+) = ADP-D-glycero-beta-D-manno-heptose + diphosphate. It functions in the pathway nucleotide-sugar biosynthesis; ADP-L-glycero-beta-D-manno-heptose biosynthesis; ADP-L-glycero-beta-D-manno-heptose from D-glycero-beta-D-manno-heptose 7-phosphate: step 1/4. It participates in nucleotide-sugar biosynthesis; ADP-L-glycero-beta-D-manno-heptose biosynthesis; ADP-L-glycero-beta-D-manno-heptose from D-glycero-beta-D-manno-heptose 7-phosphate: step 3/4. Its pathway is bacterial outer membrane biogenesis; LOS core biosynthesis. In terms of biological role, catalyzes the phosphorylation of D-glycero-D-manno-heptose 7-phosphate at the C-1 position to selectively form D-glycero-beta-D-manno-heptose-1,7-bisphosphate. Functionally, catalyzes the ADP transfer from ATP to D-glycero-beta-D-manno-heptose 1-phosphate, yielding ADP-D-glycero-beta-D-manno-heptose. The protein is Bifunctional protein HldE of Haemophilus influenzae (strain ATCC 51907 / DSM 11121 / KW20 / Rd).